The chain runs to 126 residues: Glycine cleavage system H protein (126 aa).

Positions Thr-21–Lys-103 constitute a Lipoyl-binding domain. At Lys-62 the chain carries N6-lipoyllysine.

This sequence belongs to the GcvH family. In terms of assembly, the glycine cleavage system is composed of four proteins: P, T, L and H. Requires (R)-lipoate as cofactor.

Its function is as follows. The glycine cleavage system catalyzes the degradation of glycine. The H protein shuttles the methylamine group of glycine from the P protein to the T protein. This chain is Glycine cleavage system H protein, found in Vibrio parahaemolyticus serotype O3:K6 (strain RIMD 2210633).